The following is a 176-amino-acid chain: Large ribosomal subunit protein uL6 (176 aa).

Residues 153–170 (PEPYKGKGIRYGDEEVRR) are compositionally biased toward basic and acidic residues. Positions 153–176 (PEPYKGKGIRYGDEEVRRKEAKKK) are disordered.

It belongs to the universal ribosomal protein uL6 family. As to quaternary structure, part of the 50S ribosomal subunit.

Its function is as follows. This protein binds to the 23S rRNA, and is important in its secondary structure. It is located near the subunit interface in the base of the L7/L12 stalk, and near the tRNA binding site of the peptidyltransferase center. The chain is Large ribosomal subunit protein uL6 from Chromohalobacter salexigens (strain ATCC BAA-138 / DSM 3043 / CIP 106854 / NCIMB 13768 / 1H11).